Reading from the N-terminus, the 308-residue chain is D-alanine--D-alanine ligase (308 aa).

Positions 104–304 constitute an ATP-grasp domain; sequence KQALVPHGIP…YAELVERIVE (201 aa). 131–187 contacts ATP; the sequence is LPRPYVLKPVNEGSSVGVAIVRDDSNYGNPISRDALGPWQQFDRLLAEPFIKGRELT. 3 residues coordinate Mg(2+): aspartate 255, glutamate 271, and asparagine 273.

It belongs to the D-alanine--D-alanine ligase family. Mg(2+) serves as cofactor. It depends on Mn(2+) as a cofactor.

The protein localises to the cytoplasm. It catalyses the reaction 2 D-alanine + ATP = D-alanyl-D-alanine + ADP + phosphate + H(+). The protein operates within cell wall biogenesis; peptidoglycan biosynthesis. In terms of biological role, cell wall formation. This Sphingopyxis alaskensis (strain DSM 13593 / LMG 18877 / RB2256) (Sphingomonas alaskensis) protein is D-alanine--D-alanine ligase.